The following is a 402-amino-acid chain: Probable tRNA sulfurtransferase (402 aa).

Residues 61-166 (EEIMKRISKV…SDAAYLYSRV (106 aa)) form the THUMP domain. ATP is bound by residues 184–185 (ML), 209–210 (HF), Arg-266, Gly-288, and Gln-297.

It belongs to the ThiI family.

Its subcellular location is the cytoplasm. The catalysed reaction is [ThiI sulfur-carrier protein]-S-sulfanyl-L-cysteine + a uridine in tRNA + 2 reduced [2Fe-2S]-[ferredoxin] + ATP + H(+) = [ThiI sulfur-carrier protein]-L-cysteine + a 4-thiouridine in tRNA + 2 oxidized [2Fe-2S]-[ferredoxin] + AMP + diphosphate. It carries out the reaction [ThiS sulfur-carrier protein]-C-terminal Gly-Gly-AMP + S-sulfanyl-L-cysteinyl-[cysteine desulfurase] + AH2 = [ThiS sulfur-carrier protein]-C-terminal-Gly-aminoethanethioate + L-cysteinyl-[cysteine desulfurase] + A + AMP + 2 H(+). It functions in the pathway cofactor biosynthesis; thiamine diphosphate biosynthesis. In terms of biological role, catalyzes the ATP-dependent transfer of a sulfur to tRNA to produce 4-thiouridine in position 8 of tRNAs, which functions as a near-UV photosensor. Also catalyzes the transfer of sulfur to the sulfur carrier protein ThiS, forming ThiS-thiocarboxylate. This is a step in the synthesis of thiazole, in the thiamine biosynthesis pathway. The sulfur is donated as persulfide by IscS. In Macrococcus caseolyticus (strain JCSC5402) (Macrococcoides caseolyticum), this protein is Probable tRNA sulfurtransferase.